The sequence spans 178 residues: Large ribosomal subunit protein uL6 (178 aa).

Belongs to the universal ribosomal protein uL6 family. As to quaternary structure, part of the 50S ribosomal subunit.

Its function is as follows. This protein binds to the 23S rRNA, and is important in its secondary structure. It is located near the subunit interface in the base of the L7/L12 stalk, and near the tRNA binding site of the peptidyltransferase center. This chain is Large ribosomal subunit protein uL6, found in Streptococcus agalactiae serotype V (strain ATCC BAA-611 / 2603 V/R).